The chain runs to 475 residues: uncharacterized protein (475 aa).

Residues 7 to 28 traverse the membrane as a helical segment; the sequence is HVISIFETLGAYFINIFYNFLY. Residues asparagine 73, asparagine 83, and asparagine 195 are each glycosylated (N-linked (GlcNAc...) asparagine; by host). The stretch at 183-233 forms a coiled coil; sequence ELEETYARLSSYNRSLLHQIEELTSEKKSLLADLSTLRKKYEKRQSEYRRL. A compositionally biased stretch (polar residues) spans 295–305; it reads SQELTSKSPNN. Residues 295–324 are disordered; it reads SQELTSKSPNNYPVPHSRTIVSKPPDNYPV. N-linked (GlcNAc...) asparagine; by host glycans are attached at residues asparagine 450 and asparagine 460.

Belongs to the asfivirus B475L family.

It is found in the host membrane. This is an uncharacterized protein from Ornithodoros (relapsing fever ticks).